The chain runs to 303 residues: Mitochondrial basic amino acids transporter (303 aa).

A run of 6 helical transmembrane segments spans residues 2-22, 61-81, 96-116, 153-172, 187-207, and 255-275; these read ALDFLAGCAGGVAGVLVGHPF, GLGSPLMGLTFINALVFGVQG, FLAGAAAGAIQCVICCPMELA, GMVSTLLRETPSFGVYFLTY, LLVPKLLLAGGTSGIVSWLST, and LLRAFPVNAATFATVTVVLTY. Solcar repeat units lie at residues 2-86, 90-178, and 185-275; these read ALDF…TLRA, DSPL…LTRA, and DRLL…VLTY. The segment at 282–303 is disordered; the sequence is GPEGEAVPAAPAGPALAQPSSL. Low complexity predominate over residues 284–303; sequence EGEAVPAAPAGPALAQPSSL.

It belongs to the mitochondrial carrier (TC 2.A.29) family.

The protein resides in the mitochondrion inner membrane. The catalysed reaction is L-lysine(out) + L-arginine(in) = L-lysine(in) + L-arginine(out). It catalyses the reaction L-histidine(out) + L-arginine(in) = L-histidine(in) + L-arginine(out). It carries out the reaction L-ornithine(in) + L-arginine(out) = L-ornithine(out) + L-arginine(in). The enzyme catalyses L-homoarginine(in) + L-arginine(out) = L-homoarginine(out) + L-arginine(in). The catalysed reaction is N(omega)-methyl-L-arginine(in) + L-arginine(out) = N(omega)-methyl-L-arginine(out) + L-arginine(in). It catalyses the reaction L-arginine(in) = L-arginine(out). It carries out the reaction L-lysine(in) = L-lysine(out). The enzyme catalyses L-ornithine(in) = L-ornithine(out). The catalysed reaction is L-histidine(out) = L-histidine(in). Its function is as follows. Mitochondrial transporter of arginine, lysine, homoarginine, methylarginine and, to a much lesser extent, ornithine and histidine. Does not transport carnitine nor acylcarnitines. Functions by both counter-exchange and uniport mechanisms. Plays a physiological role in the import of basic amino acids into mitochondria for mitochondrial protein synthesis and amino acid degradation. In Homo sapiens (Human), this protein is Mitochondrial basic amino acids transporter.